The chain runs to 81 residues: Protein GPR15LG (81 aa).

The N-terminal stretch at 1 to 24 (MRFLALTSLLCILLLCLSFFSAEG) is a signal peptide. 2 disulfides stabilise this stretch: Cys-40-Cys-63 and Cys-41-Cys-60.

Interacts with SUSD2; the interaction is direct.

Its subcellular location is the secreted. Its function is as follows. Highly cationic protein that has multiple functions. Acts as a chemotactic factor that mediates lymphocytes recruitment to epithelia through binding and activation of the G-protein coupled receptor GPR15. May be a tumor suppressor; together with SUSD2 has a growth inhibitory effect on colon cancer cells which includes G1 cell cycle arrest. May regulate keratinocyte proliferation. In addition, through activation of Mas-related G protein-coupled receptors (MRGPRs) contributes to pruritogenesis by activating itch-selective sensory neurons and mast cells degranulation. Has antimicrobial activity against Gram-positive bacteria, including Staphylococcus aureus and Actinomyces spec., and Mycoplasma hominis and lentivirus. This Sus scrofa (Pig) protein is Protein GPR15LG (GPR15LG).